Consider the following 382-residue polypeptide: Pyrimidine monooxygenase RutA (382 aa).

Residues 68-69, Asn134, Glu143, 159-160, and Ser209 contribute to the FMN site; these read IK and RY.

It belongs to the NtaA/SnaA/DszA monooxygenase family. RutA subfamily.

It carries out the reaction uracil + FMNH2 + NADH + O2 = (Z)-3-ureidoacrylate + FMN + NAD(+) + H2O + H(+). The catalysed reaction is thymine + FMNH2 + NADH + O2 = (Z)-2-methylureidoacrylate + FMN + NAD(+) + H2O + H(+). Its function is as follows. Catalyzes the pyrimidine ring opening between N-3 and C-4 by an unusual flavin hydroperoxide-catalyzed mechanism, adding oxygen atoms in the process to yield ureidoacrylate peracid, that immediately reacts with FMN forming ureidoacrylate and FMN-N(5)-oxide. The FMN-N(5)-oxide reacts spontaneously with NADH to produce FMN. Requires the flavin reductase RutF to regenerate FMN in vivo. The polypeptide is Pyrimidine monooxygenase RutA (Escherichia coli O55:H7 (strain CB9615 / EPEC)).